Consider the following 206-residue polypeptide: Ribosomal RNA small subunit methyltransferase G (206 aa).

S-adenosyl-L-methionine contacts are provided by residues glycine 73, leucine 78, 124-125 (VE), and arginine 139.

The protein belongs to the methyltransferase superfamily. RNA methyltransferase RsmG family.

The protein resides in the cytoplasm. The enzyme catalyses guanosine(527) in 16S rRNA + S-adenosyl-L-methionine = N(7)-methylguanosine(527) in 16S rRNA + S-adenosyl-L-homocysteine. Functionally, specifically methylates the N7 position of guanine in position 527 of 16S rRNA. The chain is Ribosomal RNA small subunit methyltransferase G from Serratia proteamaculans (strain 568).